The primary structure comprises 165 residues: Xanthine-guanine phosphoribosyltransferase (165 aa).

Residues 41 to 42 (RG) and 98 to 106 (DDLTDTGKT) each bind 5-phospho-alpha-D-ribose 1-diphosphate. Aspartate 99 contacts Mg(2+). Aspartate 102 and isoleucine 145 together coordinate guanine. Positions 102 and 145 each coordinate xanthine. GMP-binding positions include 102–106 (DTGKT) and 144–145 (WI).

The protein belongs to the purine/pyrimidine phosphoribosyltransferase family. XGPT subfamily. In terms of assembly, homotetramer. Mg(2+) is required as a cofactor.

It is found in the cell inner membrane. The catalysed reaction is GMP + diphosphate = guanine + 5-phospho-alpha-D-ribose 1-diphosphate. It carries out the reaction XMP + diphosphate = xanthine + 5-phospho-alpha-D-ribose 1-diphosphate. The enzyme catalyses IMP + diphosphate = hypoxanthine + 5-phospho-alpha-D-ribose 1-diphosphate. It functions in the pathway purine metabolism; GMP biosynthesis via salvage pathway; GMP from guanine: step 1/1. The protein operates within purine metabolism; XMP biosynthesis via salvage pathway; XMP from xanthine: step 1/1. Purine salvage pathway enzyme that catalyzes the transfer of the ribosyl-5-phosphate group from 5-phospho-alpha-D-ribose 1-diphosphate (PRPP) to the N9 position of the 6-oxopurines guanine and xanthine to form the corresponding ribonucleotides GMP (guanosine 5'-monophosphate) and XMP (xanthosine 5'-monophosphate), with the release of PPi. To a lesser extent, also acts on hypoxanthine. This Brucella canis (strain ATCC 23365 / NCTC 10854 / RM-666) protein is Xanthine-guanine phosphoribosyltransferase.